The sequence spans 1376 residues: DNA-directed RNA polymerase subunit beta'' (1376 aa).

Cys-220, Cys-293, Cys-300, and Cys-303 together coordinate Zn(2+).

This sequence belongs to the RNA polymerase beta' chain family. RpoC2 subfamily. As to quaternary structure, in plastids the minimal PEP RNA polymerase catalytic core is composed of four subunits: alpha, beta, beta', and beta''. When a (nuclear-encoded) sigma factor is associated with the core the holoenzyme is formed, which can initiate transcription. Zn(2+) is required as a cofactor.

The protein localises to the plastid. The protein resides in the chloroplast. It catalyses the reaction RNA(n) + a ribonucleoside 5'-triphosphate = RNA(n+1) + diphosphate. Its function is as follows. DNA-dependent RNA polymerase catalyzes the transcription of DNA into RNA using the four ribonucleoside triphosphates as substrates. This Arabidopsis thaliana (Mouse-ear cress) protein is DNA-directed RNA polymerase subunit beta''.